A 159-amino-acid chain; its full sequence is Ribosomal RNA large subunit methyltransferase H (159 aa).

Residues leucine 76, glycine 108, and 127-132 (FSHMTF) contribute to the S-adenosyl-L-methionine site.

The protein belongs to the RNA methyltransferase RlmH family. In terms of assembly, homodimer.

The protein resides in the cytoplasm. The catalysed reaction is pseudouridine(1915) in 23S rRNA + S-adenosyl-L-methionine = N(3)-methylpseudouridine(1915) in 23S rRNA + S-adenosyl-L-homocysteine + H(+). In terms of biological role, specifically methylates the pseudouridine at position 1915 (m3Psi1915) in 23S rRNA. This is Ribosomal RNA large subunit methyltransferase H from Halothermothrix orenii (strain H 168 / OCM 544 / DSM 9562).